We begin with the raw amino-acid sequence, 185 residues long: Ribosome-recycling factor (185 aa).

The protein belongs to the RRF family.

It localises to the cytoplasm. In terms of biological role, responsible for the release of ribosomes from messenger RNA at the termination of protein biosynthesis. May increase the efficiency of translation by recycling ribosomes from one round of translation to another. This is Ribosome-recycling factor from Pseudomonas putida (strain GB-1).